A 65-amino-acid polypeptide reads, in one-letter code: Large ribosomal subunit protein bL32 (65 aa).

A compositionally biased stretch (basic residues) spans 1–18; the sequence is MAVPKRRHSKSRTRKRRS. A disordered region spans residues 1-20; sequence MAVPKRRHSKSRTRKRRSTY.

The protein belongs to the bacterial ribosomal protein bL32 family.

This is Large ribosomal subunit protein bL32 from Salinibacter ruber (strain DSM 13855 / M31).